A 256-amino-acid chain; its full sequence is MLRIADKTFDSHLFTGTGKFASSQLMVESIRASGSQLVTLAMKRVDLRQHNDAILEPLIAAGVTLLPNTSGAKTAEEAIFAAHLAREALGTNWLKLEIHPDARWLLPDPIETLKAAETLVQQGFVVLPYCGADPVLCKRLEEVGCAAVMPLGAPIGSNQGLETRAMLEIIIQQATVPVVVDAGIGVPSHAAQALEMGADAVLVNTAIAIADDPVNMAKAFRLAVEAGLLARQSGPGSRSHFAHATSPLTGFLEASA.

The Schiff-base intermediate with DXP role is filled by K95. Residues G156, A182–G183, and N204–T205 each bind 1-deoxy-D-xylulose 5-phosphate.

This sequence belongs to the ThiG family. Homotetramer. Forms heterodimers with either ThiH or ThiS.

It is found in the cytoplasm. It catalyses the reaction [ThiS sulfur-carrier protein]-C-terminal-Gly-aminoethanethioate + 2-iminoacetate + 1-deoxy-D-xylulose 5-phosphate = [ThiS sulfur-carrier protein]-C-terminal Gly-Gly + 2-[(2R,5Z)-2-carboxy-4-methylthiazol-5(2H)-ylidene]ethyl phosphate + 2 H2O + H(+). Its pathway is cofactor biosynthesis; thiamine diphosphate biosynthesis. Functionally, catalyzes the rearrangement of 1-deoxy-D-xylulose 5-phosphate (DXP) to produce the thiazole phosphate moiety of thiamine. Sulfur is provided by the thiocarboxylate moiety of the carrier protein ThiS. In vitro, sulfur can be provided by H(2)S. This chain is Thiazole synthase, found in Escherichia coli O17:K52:H18 (strain UMN026 / ExPEC).